The chain runs to 159 residues: SsrA-binding protein (159 aa).

This sequence belongs to the SmpB family.

Its subcellular location is the cytoplasm. In terms of biological role, required for rescue of stalled ribosomes mediated by trans-translation. Binds to transfer-messenger RNA (tmRNA), required for stable association of tmRNA with ribosomes. tmRNA and SmpB together mimic tRNA shape, replacing the anticodon stem-loop with SmpB. tmRNA is encoded by the ssrA gene; the 2 termini fold to resemble tRNA(Ala) and it encodes a 'tag peptide', a short internal open reading frame. During trans-translation Ala-aminoacylated tmRNA acts like a tRNA, entering the A-site of stalled ribosomes, displacing the stalled mRNA. The ribosome then switches to translate the ORF on the tmRNA; the nascent peptide is terminated with the 'tag peptide' encoded by the tmRNA and targeted for degradation. The ribosome is freed to recommence translation, which seems to be the essential function of trans-translation. This chain is SsrA-binding protein, found in Actinobacillus pleuropneumoniae serotype 5b (strain L20).